Reading from the N-terminus, the 453-residue chain is Acyl-coenzyme A thioesterase 2, mitochondrial (453 aa).

The transit peptide at 1–42 (MVASSFAVLRASRLCQQDWKSWARLFVPPPLSTGGRTTWART) directs the protein to the mitochondrion. An N6-acetyllysine modification is found at K83. Catalysis depends on charge relay system residues S273, D365, and H399. At K447 the chain carries N6-succinyllysine.

Belongs to the C/M/P thioester hydrolase family. Monomer. In terms of tissue distribution, highly expressed in brown and white adipose tissue, muscle, heart, kidney, lung, adrenal gland and spleen; weakly expressed in intestine, testis and brain.

It is found in the mitochondrion matrix. It catalyses the reaction hexadecanoyl-CoA + H2O = hexadecanoate + CoA + H(+). It carries out the reaction tetradecanoyl-CoA + H2O = tetradecanoate + CoA + H(+). The catalysed reaction is octadecanoyl-CoA + H2O = octadecanoate + CoA + H(+). The enzyme catalyses eicosanoyl-CoA + H2O = eicosanoate + CoA + H(+). It catalyses the reaction decanoyl-CoA + H2O = decanoate + CoA + H(+). It carries out the reaction dodecanoyl-CoA + H2O = dodecanoate + CoA + H(+). The catalysed reaction is (9Z)-octadecenoyl-CoA + H2O = (9Z)-octadecenoate + CoA + H(+). The enzyme catalyses (9Z)-hexadecenoyl-CoA + H2O = (9Z)-hexadecenoate + CoA + H(+). It catalyses the reaction (9E)-octadecenoyl-CoA + H2O = (9E)-octadecenoate + CoA + H(+). It carries out the reaction (9Z,12Z)-octadecadienoyl-CoA + H2O = (9Z,12Z)-octadecadienoate + CoA + H(+). The protein operates within lipid metabolism; fatty acid metabolism. Its function is as follows. Catalyzes the hydrolysis of acyl-CoAs into free fatty acids and coenzyme A (CoASH), regulating their respective intracellular levels. Displays higher activity toward long chain acyl CoAs (C14-C20). The enzyme is involved in enhancing the hepatic fatty acid oxidation in mitochondria. The protein is Acyl-coenzyme A thioesterase 2, mitochondrial (Acot2) of Mus musculus (Mouse).